Here is a 239-residue protein sequence, read N- to C-terminus: Small ribosomal subunit protein uS2 (239 aa).

It belongs to the universal ribosomal protein uS2 family.

This is Small ribosomal subunit protein uS2 from Synechococcus sp. (strain CC9902).